A 137-amino-acid polypeptide reads, in one-letter code: NTF2-related export protein (137 aa).

One can recognise an NTF2 domain in the interval glutamate 19 to tyrosine 135.

In terms of assembly, preferentially binds Ran-GTP.

It is found in the nucleus. In terms of biological role, stimulator of protein export for NES-containing proteins. Also plays a role in the nuclear export of U1 snRNA, tRNA, and mRNA. This is NTF2-related export protein (nxt-1) from Caenorhabditis elegans.